Here is a 311-residue protein sequence, read N- to C-terminus: Olfactory receptor 5L2 (311 aa).

At 1–25 the chain is on the extracellular side; it reads MGKENCTTVAEFILLGLSDVPELRV. N-linked (GlcNAc...) asparagine glycosylation occurs at Asn-5. The helical transmembrane segment at 26–46 threads the bilayer; it reads CLFLLFLLIYGVTLLANLGMT. The Cytoplasmic portion of the chain corresponds to 47 to 54; it reads ALIQVSSR. Residues 55-75 form a helical membrane-spanning segment; that stretch reads LHTPVYFFLSHLSFVDFCYSS. Residues 76 to 99 lie on the Extracellular side of the membrane; that stretch reads IIVPKMLANIFNKDKAISFLGCMV. Cys-97 and Cys-189 form a disulfide bridge. A helical membrane pass occupies residues 100 to 120; that stretch reads QFYLFCTCGVTEVFLLAVMAY. Residues 121-139 are Cytoplasmic-facing; it reads DRFVAICNPLLYMVTMSQK. The chain crosses the membrane as a helical span at residues 140–160; it reads LRVELTSCCYFCGTVCSLIHS. The Extracellular portion of the chain corresponds to 161–196; the sequence is SLALRILFYRSNVINHFFCDLPPLLSLACSDVTVNE. Asn-195 carries an N-linked (GlcNAc...) asparagine glycan. The chain crosses the membrane as a helical span at residues 197 to 217; that stretch reads TLLFLVATLNESVTIMIILTS. The Cytoplasmic portion of the chain corresponds to 218–237; it reads YLLILTTILKIHSAESRHKA. A helical transmembrane segment spans residues 238-258; that stretch reads FSTCASHLTAITVSHGTILYI. Topologically, residues 259–271 are extracellular; sequence YCRPSSGNSGDVD. Residues 272 to 292 form a helical membrane-spanning segment; it reads KVATVFYTVVIPMLNPLIYSL. Topologically, residues 293-311 are cytoplasmic; the sequence is RNKDVNKALRKVMGSKIHS.

Belongs to the G-protein coupled receptor 1 family.

It localises to the cell membrane. Its function is as follows. Odorant receptor. The chain is Olfactory receptor 5L2 (OR5L2) from Homo sapiens (Human).